A 377-amino-acid chain; its full sequence is Chaperone protein DnaJ (377 aa).

In terms of domain architecture, J spans 5-70 (DYYEILGVER…EKRAAYDQYG (66 aa)). The CR-type zinc-finger motif lies at 134-212 (GITKDIQIQT…CHGDGRVHKT (79 aa)). Positions 147, 150, 164, 167, 186, 189, 200, and 203 each coordinate Zn(2+). 4 CXXCXGXG motif repeats span residues 147 to 154 (CDHCNGSG), 164 to 171 (CPTCHGHG), 186 to 193 (CPHCHGTG), and 200 to 207 (CKKCHGDG).

Belongs to the DnaJ family. Homodimer. Requires Zn(2+) as cofactor.

It localises to the cytoplasm. In terms of biological role, participates actively in the response to hyperosmotic and heat shock by preventing the aggregation of stress-denatured proteins and by disaggregating proteins, also in an autonomous, DnaK-independent fashion. Unfolded proteins bind initially to DnaJ; upon interaction with the DnaJ-bound protein, DnaK hydrolyzes its bound ATP, resulting in the formation of a stable complex. GrpE releases ADP from DnaK; ATP binding to DnaK triggers the release of the substrate protein, thus completing the reaction cycle. Several rounds of ATP-dependent interactions between DnaJ, DnaK and GrpE are required for fully efficient folding. Also involved, together with DnaK and GrpE, in the DNA replication of plasmids through activation of initiation proteins. The protein is Chaperone protein DnaJ of Actinobacillus succinogenes (strain ATCC 55618 / DSM 22257 / CCUG 43843 / 130Z).